A 295-amino-acid polypeptide reads, in one-letter code: 33 kDa chaperonin (295 aa).

2 disulfides stabilise this stretch: Cys-237–Cys-239 and Cys-270–Cys-273.

This sequence belongs to the HSP33 family. Post-translationally, under oxidizing conditions two disulfide bonds are formed involving the reactive cysteines. Under reducing conditions zinc is bound to the reactive cysteines and the protein is inactive.

The protein localises to the cytoplasm. Functionally, redox regulated molecular chaperone. Protects both thermally unfolding and oxidatively damaged proteins from irreversible aggregation. Plays an important role in the bacterial defense system toward oxidative stress. The chain is 33 kDa chaperonin from Lactiplantibacillus plantarum (strain ATCC BAA-793 / NCIMB 8826 / WCFS1) (Lactobacillus plantarum).